We begin with the raw amino-acid sequence, 493 residues long: Lysine--tRNA ligase (493 aa).

Residues E402 and E409 each coordinate Mg(2+).

It belongs to the class-II aminoacyl-tRNA synthetase family. In terms of assembly, homodimer. The cofactor is Mg(2+).

The protein localises to the cytoplasm. The catalysed reaction is tRNA(Lys) + L-lysine + ATP = L-lysyl-tRNA(Lys) + AMP + diphosphate. This chain is Lysine--tRNA ligase, found in Ureaplasma parvum serovar 3 (strain ATCC 27815 / 27 / NCTC 11736).